A 244-amino-acid chain; its full sequence is Probable transcriptional regulatory protein DMR_30850 (244 aa).

The protein belongs to the TACO1 family.

The protein resides in the cytoplasm. This Solidesulfovibrio magneticus (strain ATCC 700980 / DSM 13731 / RS-1) (Desulfovibrio magneticus) protein is Probable transcriptional regulatory protein DMR_30850.